The chain runs to 335 residues: Trans-3-hydroxy-L-proline dehydratase (335 aa).

The active-site Proton acceptor is cysteine 91. Substrate is bound by residues glycine 92–histidine 93, aspartate 251, and glycine 256–serine 257.

Belongs to the proline racemase family.

The enzyme catalyses trans-3-hydroxy-L-proline = 1-pyrroline-2-carboxylate + H2O. In terms of biological role, catalyzes the dehydration of trans-3-hydroxy-L-proline (t3LHyp) to Delta(1)-pyrroline-2-carboxylate (Pyr2C). Is likely involved in a degradation pathway that converts t3LHyp to L-proline. Displays neither trans-4-hydroxy-L-proline (t4LHyp) epimerase nor proline racemase activity. The chain is Trans-3-hydroxy-L-proline dehydratase from Burkholderia ambifaria (strain ATCC BAA-244 / DSM 16087 / CCUG 44356 / LMG 19182 / AMMD) (Burkholderia cepacia (strain AMMD)).